Here is a 521-residue protein sequence, read N- to C-terminus: Riboflavin transporter MCH5 (521 aa).

2 disordered regions span residues 1 to 33 (MSSD…SIHY) and 65 to 96 (NKGT…NEEI). The Cytoplasmic portion of the chain corresponds to 1–103 (MSSDSLTPKD…EEIESFPEGG (103 aa)). A helical membrane pass occupies residues 104–124 (FKAWVVTFGCFLGLIACFGLL). A glycan (N-linked (GlcNAc...) asparagine) is linked at asparagine 125. The Extracellular portion of the chain corresponds to 125–143 (NSTGVIESHLQDNQLSSES). The chain crosses the membrane as a helical span at residues 144 to 164 (VSTIGWLFSLFLFVCSASCII). Over 165–172 (SGTYFDRN) the chain is Cytoplasmic. A helical transmembrane segment spans residues 173 to 193 (GFRTIMIVGTVFHVAGLFATA). Residue asparagine 194 is glycosylated (N-linked (GlcNAc...) asparagine). Residues 194 to 200 (NSTKYWH) are Extracellular-facing. A helical transmembrane segment spans residues 201–221 (FILSFAIVCGFGNGIVLSPLV). Over 222–233 (SVPAHYFFKRRG) the chain is Cytoplasmic. A helical membrane pass occupies residues 234-254 (TALAMATIGGSVGGVVFPIML). The Extracellular portion of the chain corresponds to 255–269 (RSFFSMKSDTDPTYG). The helical transmembrane segment at 270-290 (FVWGIRTLGFLDLALLTLSII) threads the bilayer. Topologically, residues 291–325 (LVKERLPHVIENSKDGESRWRYILRVYILQCFDAK) are cytoplasmic. The helical transmembrane segment at 326 to 346 (AFLDMKYLFCVLGTVFSELSI) threads the bilayer. The Extracellular segment spans residues 347–367 (NSALTYYGSYATSHGISANDA). The helical transmembrane segment at 368-388 (YTLIMIINVCGIPGRWVPGYL) threads the bilayer. The Cytoplasmic segment spans residues 389–396 (SDKFGRFN). The chain crosses the membrane as a helical span at residues 397 to 417 (VAIATLLTLFIVMFVGWLPFG). At 418–422 (TNLTN) the chain is on the extracellular side. Asparagine 419 carries N-linked (GlcNAc...) asparagine glycosylation. Residues 423–443 (MYVISALYGFCSGSVFSLLPV) traverse the membrane as a helical segment. The Cytoplasmic segment spans residues 444 to 461 (CCGQISKTEEFGKRYSTM). Residues 462–482 (YFVVGFGTLVGIPITGAIISI) form a helical membrane-spanning segment. The Extracellular portion of the chain corresponds to 483-487 (KTTAD). The helical transmembrane segment at 488–508 (YQHYIIFCGLATFVSAVCYII) threads the bilayer. At 509 to 521 (SRAYCVGFKWVRF) the chain is on the cytoplasmic side.

The protein belongs to the major facilitator superfamily. Monocarboxylate porter (TC 2.A.1.13) family.

The protein resides in the cell membrane. In terms of biological role, riboflavin transporter involved in riboflavin (vitamin B2) uptake. Does not act in the transport of monocarboxylic acids across the plasma membrane. The protein is Riboflavin transporter MCH5 (MCH5) of Saccharomyces cerevisiae (strain ATCC 204508 / S288c) (Baker's yeast).